Reading from the N-terminus, the 54-residue chain is VATVDCSDYPKPACTLEYMPLCGSDNKTYGNKCNFCNAVVDSNGTLTLSHFGKC.

Positions valine 4–cysteine 54 constitute a Kazal-like domain. 3 disulfide bridges follow: cysteine 6–cysteine 36, cysteine 14–cysteine 33, and cysteine 22–cysteine 54. N-linked (GlcNAc...) asparagine glycosylation occurs at asparagine 43.

It is found in the secreted. In Dendrocygna arcuata (Wandering whistling-duck), this protein is Ovomucoid.